Reading from the N-terminus, the 143-residue chain is Sirohydrochlorin cobaltochelatase (143 aa).

Residue H9 is the Proton acceptor of the active site. A Co(2+)-binding site is contributed by H9. H9 serves as a coordination point for Ni(2+). Substrate-binding positions include E45 and 70-75; that span reads LAHGIH. H75 serves as a coordination point for Co(2+). Residue H75 coordinates Ni(2+).

This sequence belongs to the CbiX family. CbiXS subfamily. Homotetramer; dimer of dimers.

The catalysed reaction is Co-sirohydrochlorin + 2 H(+) = sirohydrochlorin + Co(2+). It carries out the reaction Ni-sirohydrochlorin + 2 H(+) = sirohydrochlorin + Ni(2+). It participates in cofactor biosynthesis; adenosylcobalamin biosynthesis; cob(II)yrinate a,c-diamide from sirohydrochlorin (anaerobic route): step 1/10. Catalyzes the insertion of Co(2+) into sirohydrochlorin as part of the anaerobic pathway to cobalamin biosynthesis. Involved in the biosynthesis of the unique nickel-containing tetrapyrrole coenzyme F430, the prosthetic group of methyl-coenzyme M reductase (MCR), which plays a key role in methanogenesis and anaerobic methane oxidation. Catalyzes the insertion of Ni(2+) into sirohydrochlorin to yield Ni-sirohydrochlorin. The sequence is that of Sirohydrochlorin cobaltochelatase from Methanocaldococcus jannaschii (strain ATCC 43067 / DSM 2661 / JAL-1 / JCM 10045 / NBRC 100440) (Methanococcus jannaschii).